The primary structure comprises 120 residues: Large ribosomal subunit protein bL17 (120 aa).

It belongs to the bacterial ribosomal protein bL17 family. Part of the 50S ribosomal subunit. Contacts protein L32.

The polypeptide is Large ribosomal subunit protein bL17 (Bacillus licheniformis (strain ATCC 14580 / DSM 13 / JCM 2505 / CCUG 7422 / NBRC 12200 / NCIMB 9375 / NCTC 10341 / NRRL NRS-1264 / Gibson 46)).